The primary structure comprises 251 residues: 5'-nucleotidase SurE (251 aa).

Aspartate 8, aspartate 9, serine 40, and asparagine 95 together coordinate a divalent metal cation.

The protein belongs to the SurE nucleotidase family. A divalent metal cation is required as a cofactor.

The protein localises to the cytoplasm. The catalysed reaction is a ribonucleoside 5'-phosphate + H2O = a ribonucleoside + phosphate. Its function is as follows. Nucleotidase that shows phosphatase activity on nucleoside 5'-monophosphates. This Lawsonia intracellularis (strain PHE/MN1-00) protein is 5'-nucleotidase SurE.